The chain runs to 130 residues: Small ribosomal subunit protein uS9 (130 aa).

Belongs to the universal ribosomal protein uS9 family.

The chain is Small ribosomal subunit protein uS9 from Burkholderia vietnamiensis (strain G4 / LMG 22486) (Burkholderia cepacia (strain R1808)).